The sequence spans 319 residues: Ribose-phosphate pyrophosphokinase (319 aa).

Residues 40-42 (DGE) and 99-100 (RQ) each bind ATP. Positions 134 and 174 each coordinate Mg(2+). K198 is an active-site residue. Residues R200, D224, and 228–232 (DTAGT) each bind D-ribose 5-phosphate.

It belongs to the ribose-phosphate pyrophosphokinase family. Class I subfamily. In terms of assembly, homohexamer. Mg(2+) is required as a cofactor.

The protein localises to the cytoplasm. It carries out the reaction D-ribose 5-phosphate + ATP = 5-phospho-alpha-D-ribose 1-diphosphate + AMP + H(+). It functions in the pathway metabolic intermediate biosynthesis; 5-phospho-alpha-D-ribose 1-diphosphate biosynthesis; 5-phospho-alpha-D-ribose 1-diphosphate from D-ribose 5-phosphate (route I): step 1/1. Functionally, involved in the biosynthesis of the central metabolite phospho-alpha-D-ribosyl-1-pyrophosphate (PRPP) via the transfer of pyrophosphoryl group from ATP to 1-hydroxyl of ribose-5-phosphate (Rib-5-P). This chain is Ribose-phosphate pyrophosphokinase, found in Coxiella burnetii (strain RSA 493 / Nine Mile phase I).